Reading from the N-terminus, the 348-residue chain is D-fructose 1,6-bisphosphatase class 2/sedoheptulose 1,7-bisphosphatase 2 (348 aa).

Mn(2+) contacts are provided by aspartate 33, glutamate 57, aspartate 97, and glutamate 100. Substrate-binding positions include 100 to 102 (EGT), tyrosine 131, 176 to 178 (RER), and 198 to 200 (DGD). Glutamate 225 is a binding site for Mn(2+).

It belongs to the FBPase class 2 family. As to quaternary structure, homotetramer.

The catalysed reaction is beta-D-fructose 1,6-bisphosphate + H2O = beta-D-fructose 6-phosphate + phosphate. It catalyses the reaction D-sedoheptulose 1,7-bisphosphate + H2O = D-sedoheptulose 7-phosphate + phosphate. It functions in the pathway carbohydrate biosynthesis; Calvin cycle. Functionally, catalyzes the hydrolysis of fructose 1,6-bisphosphate (Fru 1,6-P2) and sedoheptulose 1,7-bisphosphate (Sed 1,7-P2) to fructose 6-phosphate and sedoheptulose 7-phosphate, respectively. The sequence is that of D-fructose 1,6-bisphosphatase class 2/sedoheptulose 1,7-bisphosphatase 2 from Acaryochloris marina (strain MBIC 11017).